A 273-amino-acid chain; its full sequence is Dermonecrotic toxin LdSicTox-alphaIB3av (273 aa).

The active site involves His5. Mg(2+) is bound by residues Glu25 and Asp27. His41 serves as the catalytic Nucleophile. Cystine bridges form between Cys45–Cys51 and Cys47–Cys190. Asp85 is a Mg(2+) binding site.

It belongs to the arthropod phospholipase D family. Class II subfamily. The cofactor is Mg(2+). In terms of tissue distribution, expressed by the venom gland.

The protein resides in the secreted. It carries out the reaction an N-(acyl)-sphingosylphosphocholine = an N-(acyl)-sphingosyl-1,3-cyclic phosphate + choline. It catalyses the reaction an N-(acyl)-sphingosylphosphoethanolamine = an N-(acyl)-sphingosyl-1,3-cyclic phosphate + ethanolamine. The catalysed reaction is a 1-acyl-sn-glycero-3-phosphocholine = a 1-acyl-sn-glycero-2,3-cyclic phosphate + choline. The enzyme catalyses a 1-acyl-sn-glycero-3-phosphoethanolamine = a 1-acyl-sn-glycero-2,3-cyclic phosphate + ethanolamine. Dermonecrotic toxins cleave the phosphodiester linkage between the phosphate and headgroup of certain phospholipids (sphingolipid and lysolipid substrates), forming an alcohol (often choline) and a cyclic phosphate. This toxin acts on sphingomyelin (SM). It may also act on ceramide phosphoethanolamine (CPE), lysophosphatidylcholine (LPC) and lysophosphatidylethanolamine (LPE), but not on lysophosphatidylserine (LPS), and lysophosphatidylglycerol (LPG). It acts by transphosphatidylation, releasing exclusively cyclic phosphate products as second products. Induces dermonecrosis, hemolysis, increased vascular permeability, edema, inflammatory response, and platelet aggregation. The protein is Dermonecrotic toxin LdSicTox-alphaIB3av of Loxosceles deserta (Desert recluse spider).